The primary structure comprises 683 residues: Acyl-CoA synthetase short-chain family member 3, mitochondrial (683 aa).

A mitochondrion-targeting transit peptide spans 1–29 (MKPSWLQCRKVTGAGTLGAPLPGSPSVRG). A CoA-binding site is contributed by 223–226 (EPGR). Residues 421–423 (GER) and 442–447 (DHWWQT) contribute to the ATP site. K514 bears the N6-succinyllysine mark. K520 bears the N6-acetyllysine mark. Residues D535, R550, and R561 each coordinate ATP. R620 contributes to the CoA binding site.

The protein belongs to the ATP-dependent AMP-binding enzyme family. In terms of tissue distribution, expressed in a wide range of tissues, with the highest levels observed in the liver followed by kidney.

The protein resides in the mitochondrion matrix. The enzyme catalyses acetate + ATP + CoA = acetyl-CoA + AMP + diphosphate. It carries out the reaction propanoate + ATP + CoA = propanoyl-CoA + AMP + diphosphate. It catalyses the reaction butanoate + ATP + CoA = butanoyl-CoA + AMP + diphosphate. In terms of biological role, catalyzes the synthesis of acetyl-CoA from short-chain fatty acids. Propionate is the preferred substrate but can also utilize acetate and butyrate with a much lower affinity. This is Acyl-CoA synthetase short-chain family member 3, mitochondrial (Acss3) from Rattus norvegicus (Rat).